The primary structure comprises 105 residues: Small ribosomal subunit protein bS20 (105 aa).

It belongs to the bacterial ribosomal protein bS20 family.

Functionally, binds directly to 16S ribosomal RNA. This is Small ribosomal subunit protein bS20 from Moorella thermoacetica (strain ATCC 39073 / JCM 9320).